We begin with the raw amino-acid sequence, 582 residues long: Hemagglutinin-neuraminidase (582 aa).

The helical transmembrane segment at 35 to 55 threads the bilayer; it reads ILVLSVQAVTLILVIVNLGEL. Intrachain disulfides connect C178/C202, C192/C253, and C244/C257. N284 and N329 each carry an N-linked (GlcNAc...) asparagine; by host glycan. 3 disulfides stabilise this stretch: C350-C471, C382-C392, and C465-C475. N-linked (GlcNAc...) asparagine; by host glycosylation is found at N400 and N448. N507 carries an N-linked (GlcNAc...) asparagine; by host glycan. The cysteines at positions 545 and 556 are disulfide-linked.

Belongs to the paramyxoviruses hemagglutinin-neuraminidase family. Homotetramer; composed of disulfide-linked homodimers. Interacts with F protein trimer.

It localises to the virion membrane. The protein resides in the host cell membrane. It carries out the reaction Hydrolysis of alpha-(2-&gt;3)-, alpha-(2-&gt;6)-, alpha-(2-&gt;8)- glycosidic linkages of terminal sialic acid residues in oligosaccharides, glycoproteins, glycolipids, colominic acid and synthetic substrates.. Functionally, attaches the virus to alpha-2,3-linked sialic acid-containing cell receptors and thereby initiating infection. Binding of HN protein to the receptor induces a conformational change that allows the F protein to trigger virion/cell membranes fusion. Binds to the glycan motifs sialyl Lewis (SLe) and GM2 ganglioside (GM2-glycan). Neuraminidase activity ensures the efficient spread of the virus by dissociating the mature virions from the neuraminic acid containing glycoproteins. In Homo sapiens (Human), this protein is Hemagglutinin-neuraminidase (HN).